Consider the following 839-residue polypeptide: Protein translocase subunit SecA (839 aa).

Residues Gln-85, 103 to 107 (GEGKT), and Asp-493 contribute to the ATP site. Residues 780–790 (QIHEQERERAS) are compositionally biased toward basic and acidic residues. Residues 780 to 839 (QIHEQERERASQRATTAAPQNIQSQQSANTDDLPKVERNEACPCGSGKKFKNCHGRKSFS) form a disordered region. Over residues 791 to 809 (QRATTAAPQNIQSQQSANT) the composition is skewed to polar residues. Residues Cys-821, Cys-823, Cys-832, and His-833 each contribute to the Zn(2+) site. Over residues 827–839 (KKFKNCHGRKSFS) the composition is skewed to basic residues.

It belongs to the SecA family. As to quaternary structure, monomer and homodimer. Part of the essential Sec protein translocation apparatus which comprises SecA, SecYEG and auxiliary proteins SecDF. Other proteins may also be involved. Requires Zn(2+) as cofactor.

Its subcellular location is the cell membrane. The protein localises to the cytoplasm. The catalysed reaction is ATP + H2O + cellular proteinSide 1 = ADP + phosphate + cellular proteinSide 2.. Functionally, part of the Sec protein translocase complex. Interacts with the SecYEG preprotein conducting channel. Has a central role in coupling the hydrolysis of ATP to the transfer of proteins into and across the cell membrane, serving as an ATP-driven molecular motor driving the stepwise translocation of polypeptide chains across the membrane. The sequence is that of Protein translocase subunit SecA from Streptococcus pyogenes serotype M28 (strain MGAS6180).